The following is a 673-amino-acid chain: tRNA uridine 5-carboxymethylaminomethyl modification enzyme MnmG (673 aa).

Residue 17-22 (GGGHAG) coordinates FAD. Position 284-298 (284-298 (GPRYCPSVEDKINRF)) interacts with NAD(+).

It belongs to the MnmG family. Homodimer. Heterotetramer of two MnmE and two MnmG subunits. FAD serves as cofactor.

The protein localises to the cytoplasm. Functionally, NAD-binding protein involved in the addition of a carboxymethylaminomethyl (cmnm) group at the wobble position (U34) of certain tRNAs, forming tRNA-cmnm(5)s(2)U34. The protein is tRNA uridine 5-carboxymethylaminomethyl modification enzyme MnmG of Polaromonas sp. (strain JS666 / ATCC BAA-500).